A 506-amino-acid polypeptide reads, in one-letter code: DNA polymerase type-X family protein pol4 (506 aa).

A BRCT domain is found at 1-98 (MKILASSTNY…TPGNPYVIWH (98 aa)). The disordered stretch occupies residues 106-150 (GSPYTPSTRPASHTEAPNDFENHETPNTENNNEVKSIDNVDQEGS). The involved in ssDNA binding stretch occupies residues 348-357 (RGKPVGADVD). Mg(2+)-binding residues include Asp355, Asp357, and Asp419.

Belongs to the DNA polymerase type-X family. Mg(2+) serves as cofactor.

It localises to the cytoplasm. It is found in the nucleus. The catalysed reaction is DNA(n) + a 2'-deoxyribonucleoside 5'-triphosphate = DNA(n+1) + diphosphate. In terms of biological role, repair polymerase. Involved in gap-filling in DNA non-homologous end joining (NHEJ) required for double-strand break repair. Can incorporate a ribonucleotide (rNTP) into a primer DNA. The sequence is that of DNA polymerase type-X family protein pol4 (pol4) from Schizosaccharomyces pombe (strain 972 / ATCC 24843) (Fission yeast).